A 710-amino-acid chain; its full sequence is Low-temperature-induced 78 kDa protein (710 aa).

Disordered stretches follow at residues 1–198, 225–269, and 305–507; these read MDQT…LDGQ, YQSK…RDLS, and GFGD…STYT. Positions 14-25 are enriched in basic and acidic residues; that stretch reads QHPEEVEHHENG. The segment covering 29 to 41 has biased composition (basic residues); that stretch reads MFRKVKARAKKFK. Residues 49-58 are compositionally biased toward basic and acidic residues; it reads QSNEHEQDHD. Over residues 59 to 73 the composition is skewed to acidic residues; sequence LVEEDDDDDELEPEV. Residues 138-168 show a composition bias toward basic and acidic residues; sequence SDKEEKRDVPIHHPLSELSDREESRETHHES. The span at 169–187 shows a compositional bias: polar residues; sequence LNTPVSLLSGTEDVTSTFA. Tandem repeats lie at residues 303 to 316, 317 to 331, 336 to 350, 357 to 370, and 398 to 412. Positions 303-370 are 2 X 14 AA repeats of P-[MV]-G-F-G-[DS]-E-S-G-A-E-L-E-K; it reads PVGFGDESGA…GSESGAELEK (68 aa). Composition is skewed to basic and acidic residues over residues 313–331, 340–352, 367–380, 402–418, 442–466, and 475–487; these read ELEKDFPTRSHDFDMKTET, RSHEFDLKTESGN, ELEKEFDQKNDSGR, RSHELDLKNESDIDKDV, EDKFPARSDDVEVETELGRDPKTET, and SHPKERDEFKESR. The segment at 317–412 is 3 X 15 AA repeats of [DN]-[FS]-P-[STV]-R-S-H-[DE]-[FL]-D-[LM]-K-[NT]-E-[ST]; the sequence is DFPTRSHDFD…SHELDLKNES (96 aa). 3 tandem repeats follow at residues 510-514, 532-536, and 550-554. Residues 510 to 600 form a 5 X 5 AA repeats of [FV]-[ADT]-[EST]-[KM]-L region; sequence FASMLGYSGE…AFSDMVAEKL (91 aa). Residues 537–577 form a disordered region; it reads TPVNEKDQETESAVTTKLPISGGGSGVEEQRGEDKSVSGRD. Residues 564–577 are compositionally biased toward basic and acidic residues; sequence EEQRGEDKSVSGRD. 2 consecutive repeat copies span residues 579–583 and 596–600. The interval 601 to 710 is disordered; sequence QIGGEEEKKE…STVVPVQKEL (110 aa). The span at 605–626 shows a compositional bias: basic and acidic residues; that stretch reads EEEKKETTTKEVEKISTEKAAS. A Phosphoserine modification is found at Ser-626. A compositionally biased stretch (gly residues) spans 638 to 654; the sequence is GGGGMVGRIKGWFGGGA. 2 tandem repeats follow at residues 648–670 and 674–696. The tract at residues 648 to 696 is 2 X 23 AA repeats; it reads GWFGGGATDEVKPESPHSVEEAPKSSGWFGGGATEEVKPKSPHSVEESP. Composition is skewed to basic and acidic residues over residues 656 to 670 and 682 to 693; these read DEVKPESPHSVEEAP and EEVKPKSPHSVE.

It belongs to the LTI78/LTI65 family. Accumulates rapidly in leaves, stems, roots, flower petals, filaments, and sepals during cold-acclimation.

The protein localises to the cytoplasm. Involved in responses to abiotic stresses. Regulates probably root elongation in cold conditions. The polypeptide is Low-temperature-induced 78 kDa protein (Arabidopsis thaliana (Mouse-ear cress)).